Reading from the N-terminus, the 484-residue chain is Putative amidase AmiA2 (484 aa).

Catalysis depends on charge relay system residues lysine 93 and serine 167. The active-site Acyl-ester intermediate is serine 191.

Belongs to the amidase family.

The catalysed reaction is a monocarboxylic acid amide + H2O = a monocarboxylate + NH4(+). The chain is Putative amidase AmiA2 (amiA2) from Mycobacterium bovis (strain ATCC BAA-935 / AF2122/97).